Reading from the N-terminus, the 583-residue chain is Proteasome-associated ATPase (583 aa).

The stretch at alanine 2–proline 90 forms a coiled coil. ATP is bound at residue glycine 271–leucine 276. The docks into pockets in the proteasome alpha-ring stretch occupies residues tyrosine 582 to leucine 583.

The protein belongs to the AAA ATPase family. As to quaternary structure, homohexamer. Assembles into a hexameric ring structure that caps the 20S proteasome core. Strongly interacts with the prokaryotic ubiquitin-like protein Pup through a hydrophobic interface; the interacting region of ARC lies in its N-terminal coiled-coil domain. There is one Pup binding site per ARC hexamer ring. Upon ATP-binding, the C-terminus of ARC interacts with the alpha-rings of the proteasome core, possibly by binding to the intersubunit pockets.

It participates in protein degradation; proteasomal Pup-dependent pathway. In terms of biological role, ATPase which is responsible for recognizing, binding, unfolding and translocation of pupylated proteins into the bacterial 20S proteasome core particle. May be essential for opening the gate of the 20S proteasome via an interaction with its C-terminus, thereby allowing substrate entry and access to the site of proteolysis. Thus, the C-termini of the proteasomal ATPase may function like a 'key in a lock' to induce gate opening and therefore regulate proteolysis. The protein is Proteasome-associated ATPase of Acidothermus cellulolyticus (strain ATCC 43068 / DSM 8971 / 11B).